A 356-amino-acid chain; its full sequence is Phosphate acyltransferase (356 aa).

The protein belongs to the PlsX family. Homodimer. Probably interacts with PlsY.

It localises to the cytoplasm. The catalysed reaction is a fatty acyl-[ACP] + phosphate = an acyl phosphate + holo-[ACP]. Its pathway is lipid metabolism; phospholipid metabolism. Catalyzes the reversible formation of acyl-phosphate (acyl-PO(4)) from acyl-[acyl-carrier-protein] (acyl-ACP). This enzyme utilizes acyl-ACP as fatty acyl donor, but not acyl-CoA. This is Phosphate acyltransferase from Shigella boydii serotype 4 (strain Sb227).